Here is a 448-residue protein sequence, read N- to C-terminus: tRNA modification GTPase MnmE (448 aa).

(6S)-5-formyl-5,6,7,8-tetrahydrofolate is bound by residues arginine 24, glutamate 81, and lysine 120. The TrmE-type G domain maps to 216-373 (GLNVVLVGAP…LKRTLLREAG (158 aa)). Residue asparagine 226 coordinates K(+). Residues 226–231 (NVGKSS), 245–251 (TDIAGTT), and 270–273 (DTAG) each bind GTP. Serine 230 serves as a coordination point for Mg(2+). 3 residues coordinate K(+): threonine 245, isoleucine 247, and threonine 250. Threonine 251 contributes to the Mg(2+) binding site. Lysine 448 provides a ligand contact to (6S)-5-formyl-5,6,7,8-tetrahydrofolate.

It belongs to the TRAFAC class TrmE-Era-EngA-EngB-Septin-like GTPase superfamily. TrmE GTPase family. In terms of assembly, homodimer. Heterotetramer of two MnmE and two MnmG subunits. The cofactor is K(+).

Its subcellular location is the cytoplasm. In terms of biological role, exhibits a very high intrinsic GTPase hydrolysis rate. Involved in the addition of a carboxymethylaminomethyl (cmnm) group at the wobble position (U34) of certain tRNAs, forming tRNA-cmnm(5)s(2)U34. The polypeptide is tRNA modification GTPase MnmE (Neisseria meningitidis serogroup C (strain 053442)).